A 337-amino-acid chain; its full sequence is MNSWDAGLAGLLVGTIGVSLLSNGLVLLCLLHSADIRRQAPALFTLNLTCGNLLCTVVNMPLTLAGVVAQRQPAGDRLCRLAAFLDTFLAANSMLSMAALSIDRWVAVVFPLSYRAKMRLRDAAFMVAYTWLHALTFPATALALSWLGFHQLYASCTLCSRRPDERLRFAVFTSAFHALSFLLSFIVLCFTYLKVLKVARFHCKRIDVITMQTLVLLVDIHPSVRERCLEEQKRRRQRATKKISTFIGTFLVCFAPYVITRLVELFSTAPIDSHWGVLSKCLAYSKAASDPFVYSLLRHQYRRSCKELLNRIFNRRSIHSVGLTGDSHSQNILPVSE.

Topologically, residues 1–10 (MNSWDAGLAG) are extracellular. Residues 11–31 (LLVGTIGVSLLSNGLVLLCLL) form a helical membrane-spanning segment. Over 32-47 (HSADIRRQAPALFTLN) the chain is Cytoplasmic. The helical transmembrane segment at 48–68 (LTCGNLLCTVVNMPLTLAGVV) threads the bilayer. Residues 69–81 (AQRQPAGDRLCRL) are Extracellular-facing. Residues Cys-79 and Cys-156 are joined by a disulfide bond. The chain crosses the membrane as a helical span at residues 82–102 (AAFLDTFLAANSMLSMAALSI). At 103–123 (DRWVAVVFPLSYRAKMRLRDA) the chain is on the cytoplasmic side. A helical transmembrane segment spans residues 124–144 (AFMVAYTWLHALTFPATALAL). Over 145–168 (SWLGFHQLYASCTLCSRRPDERLR) the chain is Extracellular. Residues 169–189 (FAVFTSAFHALSFLLSFIVLC) traverse the membrane as a helical segment. Residues 190 to 245 (FTYLKVLKVARFHCKRIDVITMQTLVLLVDIHPSVRERCLEEQKRRRQRATKKIST) lie on the Cytoplasmic side of the membrane. The helical transmembrane segment at 246 to 266 (FIGTFLVCFAPYVITRLVELF) threads the bilayer. The Extracellular segment spans residues 267-276 (STAPIDSHWG). A helical transmembrane segment spans residues 277-297 (VLSKCLAYSKAASDPFVYSLL). Residues 298 to 337 (RHQYRRSCKELLNRIFNRRSIHSVGLTGDSHSQNILPVSE) are Cytoplasmic-facing.

This sequence belongs to the G-protein coupled receptor 1 family. As to expression, detected in extracts of several brain regions including striatum, pons, cerebellum and cortex. Not detected in numerous peripheral tissue extracts, except in testis. In the brain, detected in cortical structures including the anterior cingulate area, posterior cingulate and the frontoparietal, somatosensory and piriform cortices. Prominent also in the olfactory tubercle, the islands of Calleja, ventromedial and posterior nuclei of the hypothalamus, the medial septal nucleus, nucleus of the diagonal band and the ventral tegmental area. Localized also to hippocampal structures, with signals strongest over the CA2 and CA3 regions of Ammon's horn and less so over the dentate gyrus. Expressed in the caudate putamen only in its most caudal portion, with a decreasing gradient of signal from the dorsal to ventral aspect. Strong expression associated with a single pontine structure, the inferior olivary nucleus.

The protein localises to the cell membrane. Orphan receptor. Displays a significant level of constitutive activity. Its effect is mediated by G(s)-alpha protein that stimulate adenylate cyclase, resulting in an elevation of intracellular cAMP. The polypeptide is G-protein coupled receptor 26 (Gpr26) (Rattus norvegicus (Rat)).